We begin with the raw amino-acid sequence, 186 residues long: NADH-quinone oxidoreductase subunit B (186 aa).

The [4Fe-4S] cluster site is built by C44, C45, C110, and C139.

It belongs to the complex I 20 kDa subunit family. In terms of assembly, NDH-1 is composed of 14 different subunits. Subunits NuoB, C, D, E, F, and G constitute the peripheral sector of the complex. [4Fe-4S] cluster is required as a cofactor.

The protein localises to the cell inner membrane. It catalyses the reaction a quinone + NADH + 5 H(+)(in) = a quinol + NAD(+) + 4 H(+)(out). NDH-1 shuttles electrons from NADH, via FMN and iron-sulfur (Fe-S) centers, to quinones in the respiratory chain. The immediate electron acceptor for the enzyme in this species is believed to be ubiquinone. Couples the redox reaction to proton translocation (for every two electrons transferred, four hydrogen ions are translocated across the cytoplasmic membrane), and thus conserves the redox energy in a proton gradient. The sequence is that of NADH-quinone oxidoreductase subunit B from Leptospira interrogans serogroup Icterohaemorrhagiae serovar copenhageni (strain Fiocruz L1-130).